We begin with the raw amino-acid sequence, 558 residues long: MDLVSASQSYFKRIFQEVSDLKILLLEEDTTKIVSSCITQSNLLEQQIYLTVLLGNKREKLRHLKCVAFLRPTPTTLRLLCEELRDPKYAEYHLYFTNVIPKSFLERLAESDDFEAVKSIQEFFLDYLVVNNDLASFNIPHIIEDSPDNWQDGAFHRTHQGIISLLLSLKKKPVIRYDNNSLLCLKLAEEVSYTIQHESQLFNFRKPDTAPILLLLDRKNDPITPLLTQWTYQAMVHELFGIDNGRVSFSNSTSDNEKSTEIVLNPTLDPFYKETRFDNFGDLGVKIKDYVSHLQTKSTKKASEIESIADMKQFLEAYPEYRRLSGNVSKHVSLVSEISQVVQRENLLEVGEVEQSLVCNEPQSTDFNDIQRLLFSNISENTKLRLAALYSLRFERIDPAKVSALQQMLIAGGVNPLKVSVIPTLLHVAGYSFRQGDVFPPSNLFSRARSGLKGLRGVENVYIQHNPFLKSILLDLIQGRLKETTHPFLNSETRAQTSNEKPQDIIVVIVGGATYEEAHFVSEFNATQPGVRIILAGTTILNSTAYIDDIMYMSTRIK.

Belongs to the STXBP/unc-18/SEC1 family.

The protein resides in the cytoplasm. It is found in the nucleus. Its subcellular location is the vacuole membrane. Vacuolar protein sorting-associated protein involved in Golgi-to-vacuole protein transport. The sequence is that of Vacuolar protein sorting-associated protein 45 (vps45) from Schizosaccharomyces pombe (strain 972 / ATCC 24843) (Fission yeast).